The chain runs to 313 residues: Antiviral protein I (313 aa).

The signal sequence occupies residues 1-22 (MKSMLVVTISIWLILAPTSTWA). 2 cysteine pairs are disulfide-bonded: C56–C281 and C107–C128. The active site involves Y94. V95 contributes to the substrate binding site. Position 143 (S143) interacts with substrate. The active site involves Y145. S197 serves as a coordination point for substrate. Catalysis depends on residues E198 and R201. R201 is a binding site for substrate. Residues 286–313 (NQNAMFPQLIMSTYYNYMVNLGDLFEGF) constitute a propeptide that is removed on maturation.

It belongs to the ribosome-inactivating protein family. Type 1 RIP subfamily. Monomer. As to expression, expressed in spring leaves (at protein level). Expressed in roots (at protein level).

The catalysed reaction is Endohydrolysis of the N-glycosidic bond at one specific adenosine on the 28S rRNA.. Possesses antiviral potency. Inhibits viral infection of plants (tobacco mosaic virus). Inhibits protein synthesis. Releases both adenine and guanine from Escherichia coli rRNA in vitro. Activity on guanine is 20 times slower than that on adenine. This is Antiviral protein I (PAP1) from Phytolacca americana (American pokeweed).